Consider the following 189-residue polypeptide: Elongation factor P (189 aa).

Belongs to the elongation factor P family.

It is found in the cytoplasm. Its pathway is protein biosynthesis; polypeptide chain elongation. In terms of biological role, involved in peptide bond synthesis. Stimulates efficient translation and peptide-bond synthesis on native or reconstituted 70S ribosomes in vitro. Probably functions indirectly by altering the affinity of the ribosome for aminoacyl-tRNA, thus increasing their reactivity as acceptors for peptidyl transferase. This Aster yellows witches'-broom phytoplasma (strain AYWB) protein is Elongation factor P.